The following is a 553-amino-acid chain: Dihydrolipoyllysine-residue acetyltransferase component of pyruvate dehydrogenase complex (553 aa).

Positions 4–78 constitute a Lipoyl-binding 1 domain; it reads AIEIKVPDIG…SEGSVLVMLE (75 aa). Residue Lys44 is modified to N6-lipoyllysine. The segment at 97–118 is disordered; it reads AAAAPAPAPAPAAAPAAAPAAG. A Lipoyl-binding 2 domain is found at 122 to 196; it reads TIEVKVPDIG…AEGTLLLILE (75 aa). Lys162 carries the post-translational modification N6-lipoyllysine. Positions 250–287 constitute a Peripheral subunit-binding (PSBD) domain; that stretch reads HASPSVRKFARELGVDVSRVPGTGPKGRITQEDVQGYV. His526 is an active-site residue.

This sequence belongs to the 2-oxoacid dehydrogenase family. As to quaternary structure, forms a 24-polypeptide structural core with octahedral symmetry. Requires (R)-lipoate as cofactor.

It carries out the reaction N(6)-[(R)-dihydrolipoyl]-L-lysyl-[protein] + acetyl-CoA = N(6)-[(R)-S(8)-acetyldihydrolipoyl]-L-lysyl-[protein] + CoA. Its function is as follows. The pyruvate dehydrogenase complex catalyzes the overall conversion of pyruvate to acetyl-CoA and CO(2). It contains multiple copies of three enzymatic components: pyruvate dehydrogenase (E1), dihydrolipoamide acetyltransferase (E2) and lipoamide dehydrogenase (E3). In Cupriavidus necator (strain ATCC 17699 / DSM 428 / KCTC 22496 / NCIMB 10442 / H16 / Stanier 337) (Ralstonia eutropha), this protein is Dihydrolipoyllysine-residue acetyltransferase component of pyruvate dehydrogenase complex (pdhB).